A 200-amino-acid chain; its full sequence is Glycerol-3-phosphate acyltransferase (200 aa).

Helical transmembrane passes span 4–24, 53–73, 80–100, 115–135, and 138–158; these read FALC…AVIV, WAAL…VWCG, QFEL…PIFF, IAPI…LVFV, and GYSS…VWWF.

The protein belongs to the PlsY family. As to quaternary structure, probably interacts with PlsX.

It is found in the cell inner membrane. The enzyme catalyses an acyl phosphate + sn-glycerol 3-phosphate = a 1-acyl-sn-glycero-3-phosphate + phosphate. The protein operates within lipid metabolism; phospholipid metabolism. Its function is as follows. Catalyzes the transfer of an acyl group from acyl-phosphate (acyl-PO(4)) to glycerol-3-phosphate (G3P) to form lysophosphatidic acid (LPA). This enzyme utilizes acyl-phosphate as fatty acyl donor, but not acyl-CoA or acyl-ACP. This Actinobacillus succinogenes (strain ATCC 55618 / DSM 22257 / CCUG 43843 / 130Z) protein is Glycerol-3-phosphate acyltransferase.